A 530-amino-acid chain; its full sequence is CTP synthase (530 aa).

Residues 1–267 (MTKYVFVTGG…DDFVLNHFKM (267 aa)) are amidoligase domain. Residue Ser13 participates in CTP binding. Position 13 (Ser13) interacts with UTP. An ATP-binding site is contributed by 14–19 (SLGKGI). Tyr54 contributes to the L-glutamine binding site. Position 71 (Asp71) interacts with ATP. Residues Asp71 and Glu141 each coordinate Mg(2+). Residues 148-150 (DIE), 188-193 (KTKPTQ), and Lys224 each bind CTP. UTP contacts are provided by residues 188–193 (KTKPTQ) and Lys224. 240–242 (RDA) is a binding site for ATP. The Glutamine amidotransferase type-1 domain occupies 292–530 (KIALVGKYIE…LFKAFIGATM (239 aa)). Position 354 (Gly354) interacts with L-glutamine. Cys381 acts as the Nucleophile; for glutamine hydrolysis in catalysis. Residues 382-385 (LGMQ), Glu405, and Arg463 each bind L-glutamine. Residues His508 and Glu510 contribute to the active site.

It belongs to the CTP synthase family. In terms of assembly, homotetramer.

It carries out the reaction UTP + L-glutamine + ATP + H2O = CTP + L-glutamate + ADP + phosphate + 2 H(+). The catalysed reaction is L-glutamine + H2O = L-glutamate + NH4(+). The enzyme catalyses UTP + NH4(+) + ATP = CTP + ADP + phosphate + 2 H(+). It functions in the pathway pyrimidine metabolism; CTP biosynthesis via de novo pathway; CTP from UDP: step 2/2. Allosterically activated by GTP, when glutamine is the substrate; GTP has no effect on the reaction when ammonia is the substrate. The allosteric effector GTP functions by stabilizing the protein conformation that binds the tetrahedral intermediate(s) formed during glutamine hydrolysis. Inhibited by the product CTP, via allosteric rather than competitive inhibition. Functionally, catalyzes the ATP-dependent amination of UTP to CTP with either L-glutamine or ammonia as the source of nitrogen. Regulates intracellular CTP levels through interactions with the four ribonucleotide triphosphates. The protein is CTP synthase of Latilactobacillus sakei subsp. sakei (strain 23K) (Lactobacillus sakei subsp. sakei).